The chain runs to 68 residues: Alpha-conotoxin-like Lp1.2 (68 aa).

A signal peptide spans 1–21; sequence MGMRMMFTVFLLVVLATTVVS. A propeptide spanning residues 22–48 is cleaved from the precursor; it reads FTSDRAFDGRNAAASDKASDLISLAVR. 2 disulfides stabilise this stretch: Cys-50–Cys-56 and Cys-51–Cys-64. Residues 52 to 54 form a ser-Xaa-Pro motif, crucial for potent interaction with nAChR region; that stretch reads SHP. Cys-64 is subject to Cysteine amide. The propeptide occupies 65–68; it reads GGKR.

It belongs to the conotoxin A superfamily. As to expression, expressed by the venom duct.

It localises to the secreted. Alpha-conotoxins act on postsynaptic membranes, they bind to the nicotinic acetylcholine receptors (nAChR) and thus inhibit them. This is Alpha-conotoxin-like Lp1.2 from Conus leopardus (Leopard cone).